The following is a 202-amino-acid chain: GTP cyclohydrolase-2 (202 aa).

48 to 52 (RLHSE) lines the GTP pocket. Residues Cys-53, Cys-64, and Cys-66 each coordinate Zn(2+). GTP contacts are provided by residues Gln-69, 91–93 (EGR), and Thr-113. The active-site Proton acceptor is Asp-125. Residue Arg-127 is the Nucleophile of the active site. Thr-148 and Lys-153 together coordinate GTP.

The protein belongs to the GTP cyclohydrolase II family. Zn(2+) is required as a cofactor.

It carries out the reaction GTP + 4 H2O = 2,5-diamino-6-hydroxy-4-(5-phosphoribosylamino)-pyrimidine + formate + 2 phosphate + 3 H(+). It participates in cofactor biosynthesis; riboflavin biosynthesis; 5-amino-6-(D-ribitylamino)uracil from GTP: step 1/4. Catalyzes the conversion of GTP to 2,5-diamino-6-ribosylamino-4(3H)-pyrimidinone 5'-phosphate (DARP), formate and pyrophosphate. This Colwellia psychrerythraea (strain 34H / ATCC BAA-681) (Vibrio psychroerythus) protein is GTP cyclohydrolase-2.